The following is a 294-amino-acid chain: Cytidine deaminase (294 aa).

CMP/dCMP-type deaminase domains follow at residues 48-168 and 187-294; these read NDDE…FGPK and DNTS…RVTL. 89–91 is a binding site for substrate; the sequence is NME. Zn(2+) is bound at residue His-102. Catalysis depends on Glu-104, which acts as the Proton donor. Cys-129 and Cys-132 together coordinate Zn(2+).

This sequence belongs to the cytidine and deoxycytidylate deaminase family. As to quaternary structure, homodimer. Requires Zn(2+) as cofactor.

The enzyme catalyses cytidine + H2O + H(+) = uridine + NH4(+). It carries out the reaction 2'-deoxycytidine + H2O + H(+) = 2'-deoxyuridine + NH4(+). Functionally, this enzyme scavenges exogenous and endogenous cytidine and 2'-deoxycytidine for UMP synthesis. The sequence is that of Cytidine deaminase from Proteus mirabilis (strain HI4320).